The chain runs to 403 residues: GTPase Obg (403 aa).

In terms of domain architecture, Obg spans M1 to L159. The OBG-type G domain occupies A160–I333. GTP contacts are provided by residues G166–S173, F191–V195, D213–G216, N283–D286, and S314–A316. The Mg(2+) site is built by S173 and T193. The interval Y364–P403 is disordered. Positions Q365–I397 are enriched in acidic residues.

Belongs to the TRAFAC class OBG-HflX-like GTPase superfamily. OBG GTPase family. Monomer. It depends on Mg(2+) as a cofactor.

The protein localises to the cytoplasm. Functionally, an essential GTPase which binds GTP, GDP and possibly (p)ppGpp with moderate affinity, with high nucleotide exchange rates and a fairly low GTP hydrolysis rate. Plays a role in control of the cell cycle, stress response, ribosome biogenesis and in those bacteria that undergo differentiation, in morphogenesis control. The chain is GTPase Obg from Haemophilus influenzae (strain PittGG).